Here is a 96-residue protein sequence, read N- to C-terminus: Ribonuclease P protein component 1 (96 aa).

This sequence belongs to the eukaryotic/archaeal RNase P protein component 1 family. In terms of assembly, consists of a catalytic RNA component and at least 5 protein subunits.

It localises to the cytoplasm. It catalyses the reaction Endonucleolytic cleavage of RNA, removing 5'-extranucleotides from tRNA precursor.. Functionally, part of ribonuclease P, a protein complex that generates mature tRNA molecules by cleaving their 5'-ends. The polypeptide is Ribonuclease P protein component 1 (Methanococcus maripaludis (strain DSM 14266 / JCM 13030 / NBRC 101832 / S2 / LL)).